The following is a 231-amino-acid chain: Lipoprotein-releasing system ATP-binding protein LolD (231 aa).

One can recognise an ABC transporter domain in the interval L6–Q231. G42–S49 serves as a coordination point for ATP.

Belongs to the ABC transporter superfamily. Lipoprotein translocase (TC 3.A.1.125) family. In terms of assembly, the complex is composed of two ATP-binding proteins (LolD) and two transmembrane proteins (LolC and LolE).

Its subcellular location is the cell inner membrane. Functionally, part of the ABC transporter complex LolCDE involved in the translocation of mature outer membrane-directed lipoproteins, from the inner membrane to the periplasmic chaperone, LolA. Responsible for the formation of the LolA-lipoprotein complex in an ATP-dependent manner. In Shewanella sp. (strain MR-4), this protein is Lipoprotein-releasing system ATP-binding protein LolD.